A 501-amino-acid polypeptide reads, in one-letter code: Aldehyde dehydrogenase, cytosolic 1 (501 aa).

The residue at position 2 (serine 2) is an N-acetylserine. 2 positions are modified to N6-acetyllysine: lysine 91 and lysine 128. Residue 246-251 (GSTEVG) participates in NAD(+) binding. Lysine 252 is modified (N6-acetyllysine). Catalysis depends on glutamate 269, which acts as the Proton acceptor. Cysteine 303 acts as the Nucleophile in catalysis. N6-acetyllysine is present on residues lysine 353, lysine 367, and lysine 410. Phosphoserine is present on serine 413. An N6-acetyllysine mark is found at lysine 419 and lysine 435.

Belongs to the aldehyde dehydrogenase family. In terms of assembly, homotetramer. Highest level in liver, high level in lung, low level in kidney and testis.

Its subcellular location is the cytoplasm. It catalyses the reaction an aldehyde + NAD(+) + H2O = a carboxylate + NADH + 2 H(+). It participates in alcohol metabolism; ethanol degradation; acetate from ethanol: step 2/2. Its function is as follows. Can oxidize benzaldehyde, propionaldehyde and acetaldehyde. No detectable activity with retinal. The protein is Aldehyde dehydrogenase, cytosolic 1 of Mus musculus (Mouse).